A 220-amino-acid chain; its full sequence is Large ribosomal subunit protein uL1 (220 aa).

Belongs to the universal ribosomal protein uL1 family. In terms of assembly, part of the 50S ribosomal subunit.

In terms of biological role, binds directly to 23S rRNA. The L1 stalk is quite mobile in the ribosome, and is involved in E site tRNA release. Its function is as follows. Protein L1 is also a translational repressor protein, it controls the translation of the L11 operon by binding to its mRNA. The protein is Large ribosomal subunit protein uL1 of Ehrlichia chaffeensis (strain ATCC CRL-10679 / Arkansas).